The sequence spans 503 residues: 2,3-bisphosphoglycerate-independent phosphoglycerate mutase (503 aa).

Positions 10 and 60 each coordinate Mn(2+). Residue Ser-60 is the Phosphoserine intermediate of the active site. Residues His-121, 150–151, Arg-181, Arg-187, 256–259, and Lys-330 each bind substrate; these read RD and RPDR. Mn(2+)-binding residues include Asp-396, His-400, Asp-437, His-438, and His-455.

Belongs to the BPG-independent phosphoglycerate mutase family. In terms of assembly, monomer. Requires Mn(2+) as cofactor.

The catalysed reaction is (2R)-2-phosphoglycerate = (2R)-3-phosphoglycerate. It participates in carbohydrate degradation; glycolysis; pyruvate from D-glyceraldehyde 3-phosphate: step 3/5. Its function is as follows. Catalyzes the interconversion of 2-phosphoglycerate and 3-phosphoglycerate. The sequence is that of 2,3-bisphosphoglycerate-independent phosphoglycerate mutase from Mycoplasmoides gallisepticum (strain R(low / passage 15 / clone 2)) (Mycoplasma gallisepticum).